The primary structure comprises 766 residues: NADH-dependent flavin oxidoreductase iliE (766 aa).

Positions 1–13 are enriched in polar residues; sequence MSEQLGSHITTPS. Residues 1 to 24 are disordered; the sequence is MSEQLGSHITTPSSHDDASKDKRP. Residues 14-24 show a composition bias toward basic and acidic residues; the sequence is SHDDASKDKRP. Asn-30 is a glycosylation site (N-linked (GlcNAc...) asparagine). Residue 61–64 coordinates FMN; it reads AATA. N-linked (GlcNAc...) asparagine glycans are attached at residues Asn-70 and Asn-136. Gln-143 serves as a coordination point for FMN. Residue 224 to 227 participates in substrate binding; sequence HAGH. 385–386 contributes to the FMN binding site; that stretch reads AR. Positions 551–622 constitute a J domain; it reads TPYDILAMRK…SKRSLYDTQG (72 aa). 3 N-linked (GlcNAc...) asparagine glycosylation sites follow: Asn-634, Asn-650, and Asn-654. Residues 675-695 traverse the membrane as a helical segment; the sequence is MYMSNGVFATLVVMMCMIGAF.

This sequence belongs to the NADH:flavin oxidoreductase/NADH oxidase family.

Its subcellular location is the membrane. In terms of biological role, NADH-dependent flavin oxidoreductase; part of the gene cluster that mediates the biosynthesis of ilicicolin H, a 4-hydroxy-2-pyridonealkaloid that has potent and broad antifungal activities by inhibiting the mitochondrial respiration chain. The biosynthesis of ilicicolin H starts with formation of the tetramic acid by the hybrid PKS-NRPS synthetase iliA with the partnering trans-enoyl reductase iliB since iliA lacks a designated enoylreductase (ER) domain. The cytochrome P450 monooxygenase iliC then catalyzes the ring expansion of the tetramate to the acyclic 2-pyridone. The pericyclase iliD further converts the acyclic 2-pyridone into 8-epi-ilicicolin H. 8-epi-ilicicolin H might then spontaneously convert to ilicicolin H since ilicicolin H is produced in the absence of the epimerase iliE, in contrast to what was observed for the Talaromyces variabilis ilicolin H biosynthetic pathway. The sequence is that of NADH-dependent flavin oxidoreductase iliE from Neonectria sp. (strain DH2).